A 329-amino-acid chain; its full sequence is MMSNSSSEIDVIKTRIPTYDEDDNTILYAYETKPEFVNKEPNIVSDASCNTEEQLKTVDDVLIHCQVIYDALQNLDKKIDVIRRKVSKIQRFHARSLWTNHKRYGYKKHSYRLVKKLKLQKMKKNEVYETFSYPESYSPTLPVSRRENNSPSNLPRPSFCMEEYQRAELEEDPILSRTPSPVHPSDFSEHNCQPYYASDGATYGSSSGLCLGNPRADSIHNTYSTDHASAAPPSVTRSPVENDGYIEEGSITKHPSTWSVEAVVLFLKQTDPLALCPLVDLFRSHEIDGKALLLLTSDVLLKHLGVKLGTAVKLCYYIDRLKQGKCFEN.

Residues Ser-138 and Ser-238 each carry the phosphoserine modification. Residues 138–157 form a disordered region; that stretch reads SPTLPVSRRENNSPSNLPRP. The 68-residue stretch at 258–325 folds into the SAM domain; that stretch reads WSVEAVVLFL…YYIDRLKQGK (68 aa).

Belongs to the SCM family. In terms of tissue distribution, ubiquitous. Expressed in fetal and adult tissues.

The protein resides in the nucleus. Putative Polycomb group (PcG) protein. PcG proteins act by forming multiprotein complexes, which are required to maintain the transcriptionally repressive state of homeotic genes throughout development. May be involved in spermatogenesis during sexual maturation. The polypeptide is Sex comb on midleg-like protein 1 (SCML1) (Homo sapiens (Human)).